A 110-amino-acid polypeptide reads, in one-letter code: MIDLEVYVEKERHNPLLRRREVYCRLSFEGKTPSRKEVRGKIAGLMNAEPERVVVDYIKTEFGKTEAKCYVKIYDTVEDLQKIEEEHIIERNKVEEQAEEAEEAEAGAAE.

Positions 91 to 110 are disordered; the sequence is RNKVEEQAEEAEEAEAGAAE. Over residues 97–110 the composition is skewed to acidic residues; it reads QAEEAEEAEAGAAE.

It belongs to the eukaryotic ribosomal protein eS24 family.

This Archaeoglobus fulgidus (strain ATCC 49558 / DSM 4304 / JCM 9628 / NBRC 100126 / VC-16) protein is Small ribosomal subunit protein eS24.